We begin with the raw amino-acid sequence, 425 residues long: Serine--tRNA ligase (425 aa).

Residue Thr-233–Glu-235 coordinates L-serine. Arg-264 to Glu-266 contributes to the ATP binding site. Glu-287 is an L-serine binding site. An ATP-binding site is contributed by Glu-351–Ser-354. Residue Ser-387 coordinates L-serine.

The protein belongs to the class-II aminoacyl-tRNA synthetase family. Type-1 seryl-tRNA synthetase subfamily. Homodimer. The tRNA molecule binds across the dimer.

Its subcellular location is the cytoplasm. The enzyme catalyses tRNA(Ser) + L-serine + ATP = L-seryl-tRNA(Ser) + AMP + diphosphate + H(+). The catalysed reaction is tRNA(Sec) + L-serine + ATP = L-seryl-tRNA(Sec) + AMP + diphosphate + H(+). The protein operates within aminoacyl-tRNA biosynthesis; selenocysteinyl-tRNA(Sec) biosynthesis; L-seryl-tRNA(Sec) from L-serine and tRNA(Sec): step 1/1. Catalyzes the attachment of serine to tRNA(Ser). Is also able to aminoacylate tRNA(Sec) with serine, to form the misacylated tRNA L-seryl-tRNA(Sec), which will be further converted into selenocysteinyl-tRNA(Sec). The polypeptide is Serine--tRNA ligase (Clostridium botulinum (strain Eklund 17B / Type B)).